A 271-amino-acid chain; its full sequence is Delta(3,5)-Delta(2,4)-dienoyl-CoA isomerase (271 aa).

Residues 62 to 66 (SGGKF) and L120 each bind substrate. The active-site Proton donor/acceptor is the E152. The Peroxisome targeting signal (PTS1) signature appears at 269–271 (HKL).

Belongs to the enoyl-CoA hydratase/isomerase family. As to quaternary structure, interacts with ECI1.

It localises to the peroxisome. It carries out the reaction a (3E,5Z)-dienoyl-CoA = a (2E,4E)-(5,6-saturated)-dienoyl-CoA. It functions in the pathway lipid metabolism; fatty acid beta-oxidation. Peroxisomal di-isomerase that is involved in fatty acid metabolism enzyme by converting 3,5-dienoyl-CoAs to the corresponding 2,4-dienoyl-CoAs. Required for ECI1 to be located to the peroxisome. This is Delta(3,5)-Delta(2,4)-dienoyl-CoA isomerase from Saccharomyces cerevisiae (strain ATCC 204508 / S288c) (Baker's yeast).